We begin with the raw amino-acid sequence, 144 residues long: Heme transporter hrg1-B (144 aa).

The next 4 membrane-spanning stretches (helical) occupy residues Ile6–Val26, Ala38–Ile58, Phe71–Ile91, and Phe107–Tyr127. A Di-leucine motif motif is present at residues Ile140–Leu141.

It belongs to the HRG family.

The protein localises to the endosome membrane. It localises to the lysosome membrane. It is found in the cytoplasmic vesicle. Its subcellular location is the phagosome membrane. It catalyses the reaction heme b(in) = heme b(out). Heme transporter that regulates intracellular heme availability through the endosomal or lysosomal compartment. In macrophages, is the heme transporter for heme-iron recycling. Essential for macrophage iron homeostasis, transports heme from the phagolysosome to the cytoplasm during erythrophagocytosis (EP). The protein is Heme transporter hrg1-B (slc48a1a) of Danio rerio (Zebrafish).